Reading from the N-terminus, the 292-residue chain is Oxidative stress-responsive serine-rich protein 1 (292 aa).

Residues 27 to 175 (SIASLSVGEG…SSDATQVSQA (149 aa)) form a disordered region. Basic residues predominate over residues 65 to 83 (STRKSSRGVVRTQRRRRSK). 2 positions are modified to phosphothreonine: T143 and T233.

This Pongo abelii (Sumatran orangutan) protein is Oxidative stress-responsive serine-rich protein 1 (OSER1).